We begin with the raw amino-acid sequence, 382 residues long: Alpha-2B adrenergic receptor (382 aa).

A helical membrane pass occupies residues Ala1–Leu25. Topologically, residues Thr26 to Leu36 are cytoplasmic. Residues Phe37–Leu62 traverse the membrane as a helical segment. Over Gly63–Cys72 the chain is Extracellular. A disulfide bridge connects residues Cys72 and Cys151. Residues Glu73–Leu95 form a helical membrane-spanning segment. At Asp96 to Lys117 the chain is on the cytoplasmic side. The chain crosses the membrane as a helical span at residues Gly118–Asp140. The Extracellular segment spans residues Lys141 to Glu156. A helical transmembrane segment spans residues Ala157–Leu180. Residues Arg181–Val346 are Cytoplasmic-facing. The tract at residues Gln192–Gln305 is disordered. Positions Glu271–Cys284 are enriched in acidic residues. Over residues Thr291–Gln305 the composition is skewed to polar residues. Residues Leu347–Ile370 form a helical membrane-spanning segment. At Cys371–His379 the chain is on the extracellular side. The helical transmembrane segment at Gly380–Phe382 threads the bilayer.

The protein belongs to the G-protein coupled receptor 1 family. Adrenergic receptor subfamily. ADRA2B sub-subfamily. As to quaternary structure, interacts with RAB26. Interacts with PPP1R9B. Interacts with GGA1, GGA2 and GGA3.

It is found in the cell membrane. In terms of biological role, alpha-2 adrenergic receptors mediate the catecholamine-induced inhibition of adenylate cyclase through the action of G proteins. The protein is Alpha-2B adrenergic receptor (ADRA2B) of Didelphis virginiana (North American opossum).